A 263-amino-acid polypeptide reads, in one-letter code: Hydroxyacylglutathione hydrolase (263 aa).

Zn(2+)-binding residues include histidine 55, histidine 57, aspartate 59, histidine 60, histidine 117, aspartate 134, and histidine 172.

This sequence belongs to the metallo-beta-lactamase superfamily. Glyoxalase II family. Monomer. The cofactor is Zn(2+).

The enzyme catalyses an S-(2-hydroxyacyl)glutathione + H2O = a 2-hydroxy carboxylate + glutathione + H(+). Its pathway is secondary metabolite metabolism; methylglyoxal degradation; (R)-lactate from methylglyoxal: step 2/2. Its function is as follows. Thiolesterase that catalyzes the hydrolysis of S-D-lactoyl-glutathione to form glutathione and D-lactic acid. In Shewanella baltica (strain OS185), this protein is Hydroxyacylglutathione hydrolase.